The chain runs to 306 residues: Ribonuclease Z (306 aa).

Zn(2+) is bound by residues H63, H65, D67, H68, H141, D211, and H269. D67 acts as the Proton acceptor in catalysis.

The protein belongs to the RNase Z family. Homodimer. The cofactor is Zn(2+).

It catalyses the reaction Endonucleolytic cleavage of RNA, removing extra 3' nucleotides from tRNA precursor, generating 3' termini of tRNAs. A 3'-hydroxy group is left at the tRNA terminus and a 5'-phosphoryl group is left at the trailer molecule.. Its function is as follows. Zinc phosphodiesterase, which displays some tRNA 3'-processing endonuclease activity. Probably involved in tRNA maturation, by removing a 3'-trailer from precursor tRNA. The protein is Ribonuclease Z of Staphylococcus aureus (strain MSSA476).